Here is a 247-residue protein sequence, read N- to C-terminus: MSKLFWAMLSFITRLPVPRRWSQGLDFEHYSRGIITFPLIGLLLGAISGLVFMVLQAWCGVPLAALFSVLVLALMTGGFHLDGLADTCDGVFSARSRDCMLEIMRDSRLGTHGGLALIFVVLAKILVLSELALRGEPSLASLAAACAVSRGTAALLMYRHRYAREEGLGNVFIGKIDGRQTCVTLGLAAIFAAVLLPGMHGVAAMVVTMVAIFILGQLLKRTLGGQTGDTLGAAIELGELVFLLALL.

The next 4 helical transmembrane spans lie at 34–54, 59–79, 113–133, and 194–214; these read IITF…VFMV, CGVP…TGGF, GGLA…ELAL, and VLLP…AIFI.

The protein belongs to the CobS family. Requires Mg(2+) as cofactor.

It localises to the cell inner membrane. The catalysed reaction is alpha-ribazole + adenosylcob(III)inamide-GDP = adenosylcob(III)alamin + GMP + H(+). It catalyses the reaction alpha-ribazole 5'-phosphate + adenosylcob(III)inamide-GDP = adenosylcob(III)alamin 5'-phosphate + GMP + H(+). It participates in cofactor biosynthesis; adenosylcobalamin biosynthesis; adenosylcobalamin from cob(II)yrinate a,c-diamide: step 7/7. In terms of biological role, joins adenosylcobinamide-GDP and alpha-ribazole to generate adenosylcobalamin (Ado-cobalamin). Also synthesizes adenosylcobalamin 5'-phosphate from adenosylcobinamide-GDP and alpha-ribazole 5'-phosphate. In Escherichia coli (strain ATCC 8739 / DSM 1576 / NBRC 3972 / NCIMB 8545 / WDCM 00012 / Crooks), this protein is Adenosylcobinamide-GDP ribazoletransferase.